The primary structure comprises 437 residues: mRNA cleavage and polyadenylation factor CLP1 (437 aa).

ATP contacts are provided by residues glutamate 23 and serine 122 to serine 127.

It belongs to the Clp1 family. Clp1 subfamily. As to quaternary structure, component of a pre-mRNA cleavage factor complex. Interacts directly with PCF11.

The protein localises to the nucleus. Functionally, required for endonucleolytic cleavage during polyadenylation-dependent pre-mRNA 3'-end formation. This Kluyveromyces lactis (strain ATCC 8585 / CBS 2359 / DSM 70799 / NBRC 1267 / NRRL Y-1140 / WM37) (Yeast) protein is mRNA cleavage and polyadenylation factor CLP1.